A 313-amino-acid chain; its full sequence is HPr kinase/phosphorylase (313 aa).

Catalysis depends on residues histidine 136 and lysine 157. Glycine 151–serine 158 lines the ATP pocket. Serine 158 contacts Mg(2+). The active-site Proton acceptor; for phosphorylation activity. Proton donor; for dephosphorylation activity is the aspartate 175. Residues leucine 199–asparagine 208 form an important for the catalytic mechanism of both phosphorylation and dephosphorylation region. Glutamate 200 contacts Mg(2+). The active site involves arginine 241. Residues proline 262 to arginine 267 are important for the catalytic mechanism of dephosphorylation.

The protein belongs to the HPrK/P family. Homohexamer. It depends on Mg(2+) as a cofactor.

The catalysed reaction is [HPr protein]-L-serine + ATP = [HPr protein]-O-phospho-L-serine + ADP + H(+). The enzyme catalyses [HPr protein]-O-phospho-L-serine + phosphate + H(+) = [HPr protein]-L-serine + diphosphate. In terms of biological role, catalyzes the ATP- as well as the pyrophosphate-dependent phosphorylation of a specific serine residue in HPr, a phosphocarrier protein of the phosphoenolpyruvate-dependent sugar phosphotransferase system (PTS). HprK/P also catalyzes the pyrophosphate-producing, inorganic phosphate-dependent dephosphorylation (phosphorolysis) of seryl-phosphorylated HPr (P-Ser-HPr). The two antagonistic activities of HprK/P are regulated by several intracellular metabolites, which change their concentration in response to the absence or presence of rapidly metabolisable carbon sources (glucose, fructose, etc.) in the growth medium. Therefore, by controlling the phosphorylation state of HPr, HPrK/P is a sensor enzyme that plays a major role in the regulation of carbon metabolism and sugar transport: it mediates carbon catabolite repression (CCR), and regulates PTS-catalyzed carbohydrate uptake and inducer exclusion. This Staphylococcus saprophyticus subsp. saprophyticus (strain ATCC 15305 / DSM 20229 / NCIMB 8711 / NCTC 7292 / S-41) protein is HPr kinase/phosphorylase.